The sequence spans 268 residues: Activator of basal transcription 1 (268 aa).

The stretch at 6-38 forms a coiled coil; it reads KLVEEQKAAMEEEKEVNAEAAEELEEAEEASCN. An RRM domain is found at 47 to 144; that stretch reads GIVYLGHVPP…RKRSPFRYDL (98 aa). The stretch at 163–193 forms a coiled coil; that stretch reads AFERQVRRQRLRAEVAQAKRETDFYLRNVEQ. Positions 200-242 are disordered; that stretch reads ADGDATRPNSSWTFTQRPTEQELRAQKGARPGGRERARLATVQ. The span at 206 to 217 shows a compositional bias: polar residues; the sequence is RPNSSWTFTQRP.

The protein belongs to the ESF2/ABP1 family. Interacts with IGHMBP2. Interacts with ESF1/ABTAP.

It localises to the nucleus. Its subcellular location is the nucleolus. May be a novel TATA-binding protein (TBP) which can function as a basal transcription activator. Can act as a regulator of basal transcription for class II genes. In Rattus norvegicus (Rat), this protein is Activator of basal transcription 1 (Abt1).